A 223-amino-acid polypeptide reads, in one-letter code: Killer cell lectin-like receptor subfamily B member 1B allele A (223 aa).

The Cytoplasmic portion of the chain corresponds to 1–43 (MDSTTLVYADLNLARIQEPKHDSPPSLSPDTCRCPRWHRLALK). The ITIM motif signature appears at 6-11 (LVYADL). The short motif at 32–35 (CRCP) is the LCK-binding motif element. Residues 44–63 (FGCAGLILLVLVVIGLCVLV) form a helical; Signal-anchor for type II membrane protein membrane-spanning segment. Over 64-223 (LSVQKSSVQK…LNHETPSNDS (160 aa)) the chain is Extracellular. Residues 93–212 (ECPQDWLSHR…STDNRWICQK (120 aa)) enclose the C-type lectin domain. 2 disulfides stabilise this stretch: Cys-122–Cys-210 and Cys-189–Cys-202.

Homodimer; disulfide-linked. Interacts with tyrosine kinase LCK. Binds PTPN6/SHP-1 in a phosphorylation-dependent manner. As to expression, expressed in NK cells and a subset of T-cells.

The protein localises to the membrane. Receptor for CLEC2D/OCIL. Ligand-binding contributes to inhibition of cytotoxic natural killer (NK) cells. May mediate MHC class I-independent 'missing-self' recognition of allografts, tumor cells and virus-infected cells. The polypeptide is Killer cell lectin-like receptor subfamily B member 1B allele A (Klrb1b) (Mus musculus (Mouse)).